Here is an 800-residue protein sequence, read N- to C-terminus: Putative antiporter subunit mnhA2 (800 aa).

Helical transmembrane passes span 1–21 (MSLV…LFTL), 29–49 (VAGY…IMKI), 78–98 (GLSL…FFYA), 109–129 (LPRF…IVIA), 133–153 (ILMY…ISYW), 167–187 (FMIT…LYII), 209–229 (FIPM…QFPF), 241–261 (TPVS…FLLF), 272–292 (VYIY…SLTA), 300–320 (GILA…VGLG), 336–356 (ILVL…KCAL), 387–407 (IVML…GFLS), 424–444 (YGFV…ILTF), 472–492 (PWLF…IFFV), 528–548 (VNLP…LALV), 595–615 (IMIT…TVGF), 627–647 (GPLE…LIFI), 651–671 (LTMV…FIAM), 676–696 (LALT…VSFS), 712–732 (TFKI…IFVA), and 768–788 (LDTM…YTLL).

The protein belongs to the CPA3 antiporters (TC 2.A.63) subunit A family. As to quaternary structure, may form a heterooligomeric complex that consists of seven subunits: mnhA2, mnhB2, mnhC2, mnhD2, mnhE2, mnhF2 and mnhG2.

The protein localises to the cell membrane. The sequence is that of Putative antiporter subunit mnhA2 (mnhA2) from Staphylococcus epidermidis (strain ATCC 12228 / FDA PCI 1200).